The following is a 403-amino-acid chain: Phosphoglycerate kinase (403 aa).

Substrate is bound by residues 21 to 23, Arg36, 59 to 62, Arg119, and Arg159; these read DFN and HLGR. Residues Lys214, Gly301, Glu332, and 359 to 362 each bind ATP; that span reads GGDS.

It belongs to the phosphoglycerate kinase family. As to quaternary structure, monomer.

It is found in the cytoplasm. It carries out the reaction (2R)-3-phosphoglycerate + ATP = (2R)-3-phospho-glyceroyl phosphate + ADP. Its pathway is carbohydrate degradation; glycolysis; pyruvate from D-glyceraldehyde 3-phosphate: step 2/5. The protein is Phosphoglycerate kinase of Lactobacillus delbrueckii subsp. lactis.